Consider the following 68-residue polypeptide: Probable tautomerase jhp_0858 (68 aa).

Proline 2 acts as the Proton acceptor; via imino nitrogen in catalysis.

The protein belongs to the 4-oxalocrotonate tautomerase family.

The polypeptide is Probable tautomerase jhp_0858 (Helicobacter pylori (strain J99 / ATCC 700824) (Campylobacter pylori J99)).